Reading from the N-terminus, the 590-residue chain is Nuclear receptor subfamily 2 group C member 1 (590 aa).

Residues Met-1–Met-166 form a required for interaction with KAT2B region. The segment at residues Phe-98–Cys-173 is a DNA-binding region (nuclear receptor). 2 NR C4-type zinc fingers span residues Cys-101–Cys-121 and Cys-137–Cys-156. A phosphoserine mark is found at Ser-185 and Ser-203. A Phosphothreonine modification is found at Thr-208. Residue Thr-210 is modified to Phosphothreonine; by MAPK1. Residue Lys-238 forms a Glycyl lysine isopeptide (Lys-Gly) (interchain with G-Cter in SUMO); alternate linkage. A Glycyl lysine isopeptide (Lys-Gly) (interchain with G-Cter in SUMO2); alternate cross-link involves residue Lys-238. Residues Glu-333–Glu-577 form the NR LBD domain. Ser-568 is subject to Phosphoserine; by PKC. The tract at residues Pro-571–Leu-590 is required for interaction with NRIP1. A Glycyl lysine isopeptide (Lys-Gly) (interchain with G-Cter in SUMO2) cross-link involves residue Lys-575.

The protein belongs to the nuclear hormone receptor family. NR2 subfamily. In terms of assembly, homodimer. Heterodimer; with NR2C2 which is required for chromatin remodeling and for binding to promoter regions such as globin DR1 repeats. Interacts with ESR1; the interaction prevents homodimerization of ESR1 and suppresses its transcriptional activity and cell growth. Interacts with NRIP1 (via its LXXLL motifs); the interaction provides corepressor activity. Interacts with HDAC3 (via the DNA-binding domain); the interaction recruits phosphorylated NR2C1 to PML bodies for sumoylation. Interacts with HDAC4 (via the DNA-binding domain). Interacts with PIAS1; the interaction is required for sumoylation of NR2C1. Interacts with UBE2I; the interaction is required for sumoylation of NR2C1. Interacts with KAT2B; the interaction acts as a corepressor of gene expression. Sumoylation requires both PIAS1 and UBE2I. Sumoylation appears to dissociate NR2C1 from the PML nuclear bodies. Enhances the interaction with NRIP1 but inhibits interaction with KAT2B. In proliferating cells, stimulation by all-trans retinoic acid, activation of MAPK1-mediated phosphorylation and recruitment to PML bodies with subsequent sumoylation, suppresses OCT4 expression. In terms of processing, phosphorylated on several serine and threonine residues. Phosphorylation on Thr-210, stimulated by all-trans retinoic acid (atRA) mediates PML location and sumoylation in proliferating cells which then modulates its association with effector molecules, KAT2B and NRIP1. Phosphorylation on Ser-568 by PKC is important for protein stability and function as activator of RARB.

It is found in the nucleus. It localises to the PML body. In terms of biological role, orphan nuclear receptor. Binds the IR7 element in the promoter of its own gene in an autoregulatory negative feedback mechanism. Primarily repressor of a broad range of genes including ESR1 and RARB. Together with NR2C2, forms the core of the DRED (direct repeat erythroid-definitive) complex that represses embryonic and fetal globin transcription. Binds to hormone response elements (HREs) consisting of two 5'-AGGTCA-3' half site direct repeat consensus sequences. Also activator of OCT4 gene expression. Plays a fundamental role in early embryogenesis and regulates embryonic stem cell proliferation and differentiation. Mediator of retinoic acid-regulated preadipocyte proliferation. The chain is Nuclear receptor subfamily 2 group C member 1 (Nr2c1) from Rattus norvegicus (Rat).